We begin with the raw amino-acid sequence, 989 residues long: Vacuolar membrane protease (989 aa).

The interval 1-25 (MDRQSLRTTLRAMDASNENGSAKGA) is disordered. Topologically, residues 1 to 41 (MDRQSLRTTLRAMDASNENGSAKGAKKTTIGSFVRWTFGFN) are cytoplasmic. The helical transmembrane segment at 42–62 (SVPLTTLVTITTVLLGLLVYV) threads the bilayer. Residues 63-383 (STSVNPPDVT…YLFIILPLQY (321 aa)) lie on the Vacuolar side of the membrane. The Zn(2+) site is built by H181 and D193. Residue E227 is the Proton acceptor of the active site. E228 provides a ligand contact to Zn(2+). N-linked (GlcNAc...) asparagine glycosylation occurs at N245. Residues E253 and H325 each contribute to the Zn(2+) site. Residues 384-404 (IFVISCLTLAVGPIFVGFLFL) form a helical membrane-spanning segment. Over 405–426 (LVLRKQINAGTSETILGGWLRS) the chain is Cytoplasmic. The chain crosses the membrane as a helical span at residues 427-447 (IVSVLVSVVATYFVVETLHLG). At 448–460 (NELYVVRSFYTPL) the chain is on the vacuolar side. The chain crosses the membrane as a helical span at residues 461-481 (FAGLGTFIFVNYVLLGFFHFV). Over 482-488 (RPVCDQK) the chain is Cytoplasmic. The helical transmembrane segment at 489–509 (LIILLELSVVLWVLLLLSVIH) threads the bilayer. Over 510–520 (EATHKATGEYH) the chain is Vacuolar. Residues 521–541 (FLILYIVVATASILGLFGHLV) traverse the membrane as a helical segment. Residues 542–611 (TSTETSTFVE…IAVSMGYDWS (70 aa)) lie on the Cytoplasmic side of the membrane. The disordered stretch occupies residues 548-576 (TFVEGPEDEEDTVDASEATETSPLLPEAS). The segment covering 552-561 (GPEDEEDTVD) has biased composition (acidic residues). A helical membrane pass occupies residues 612–632 (IQFLLVVPITFFVTFGLAASL). Topologically, residues 633–648 (LDGLHQTPLESEKSAD) are vacuolar. A helical membrane pass occupies residues 649–669 (FVYTTITAMSVLVGITFLPFV). Over 670 to 673 (HKLQ) the chain is Cytoplasmic. The chain crosses the membrane as a helical span at residues 674 to 694 (VFVPIVVVGVAVTASFVHILS). The Vacuolar segment spans residues 695–989 (PPFSSNAPAK…LVEVSKYVEL (295 aa)). 3 N-linked (GlcNAc...) asparagine glycosylation sites follow: N745, N793, and N822.

Belongs to the peptidase M28 family. Zn(2+) is required as a cofactor.

It is found in the vacuole membrane. May be involved in vacuolar sorting and osmoregulation. The protein is Vacuolar membrane protease of Yarrowia lipolytica (strain CLIB 122 / E 150) (Yeast).